We begin with the raw amino-acid sequence, 237 residues long: Ly6/PLAUR domain-containing protein 8 (237 aa).

An N-terminal signal peptide occupies residues methionine 1–serine 19. Residues asparagine 45, asparagine 73, asparagine 107, asparagine 118, asparagine 132, asparagine 172, asparagine 175, and asparagine 185 are each glycosylated (N-linked (GlcNAc...) asparagine). Residues cysteine 125 to alanine 176 enclose the UPAR/Ly6 domain. The GPI-anchor amidated asparagine moiety is linked to residue asparagine 215. Residues valine 216 to proline 237 constitute a propeptide, removed in mature form.

Belongs to the CNF-like-inhibitor family. In terms of processing, highly N-glycosylated. Not O-glycosylated. Post-translationally, GPI-anchored. The GPI-anchor is cleaved, leading to secretion into the colonic lumen. Expressed in the large intestine. Preferentially expressed on the epithelial layer exposed to the lumen (at protein level).

It localises to the cell membrane. The protein resides in the secreted. Functionally, secreted protein specifically required to prevent invasion of Gram-negative bacteria in the inner mucus layer of the colon epithelium, a portion of the large intestine which is free of commensal microbiota. Prevents invasion of flagellated microbiota by binding to the flagellum of bacteria, such as P.mirabilis, thereby inhibiting bacterial motility in the intestinal lumen. Segregation of intestinal bacteria and epithelial cells in the colon is required to preserve intestinal homeostasis. The polypeptide is Ly6/PLAUR domain-containing protein 8 (Homo sapiens (Human)).